The primary structure comprises 298 residues: Ribose-phosphate pyrophosphokinase (298 aa).

Residues 33–35 and 91–92 contribute to the ATP site; these read DGE and RQ. 2 residues coordinate Mg(2+): His125 and Asp164. Lys187 is a catalytic residue. D-ribose 5-phosphate-binding residues include Arg189 and Asp224.

This sequence belongs to the ribose-phosphate pyrophosphokinase family. Class III (archaeal) subfamily. Mg(2+) is required as a cofactor.

The protein localises to the cytoplasm. The enzyme catalyses D-ribose 5-phosphate + ATP = 5-phospho-alpha-D-ribose 1-diphosphate + AMP + H(+). It functions in the pathway metabolic intermediate biosynthesis; 5-phospho-alpha-D-ribose 1-diphosphate biosynthesis; 5-phospho-alpha-D-ribose 1-diphosphate from D-ribose 5-phosphate (route I): step 1/1. Its function is as follows. Involved in the biosynthesis of the central metabolite phospho-alpha-D-ribosyl-1-pyrophosphate (PRPP) via the transfer of pyrophosphoryl group from ATP to 1-hydroxyl of ribose-5-phosphate (Rib-5-P). This chain is Ribose-phosphate pyrophosphokinase, found in Methanobrevibacter smithii (strain ATCC 35061 / DSM 861 / OCM 144 / PS).